Reading from the N-terminus, the 543-residue chain is Zinc finger protein 34 (543 aa).

Positions 14–87 (VTFEDVAVFL…DMHGAEQPSV (74 aa)) constitute a KRAB domain. Positions 84 to 151 (QPSVDGSAHG…PGEQRGPRLV (68 aa)) are disordered. Residues 124 to 147 (EPGEVHERVREPEGRLDRPGEQRG) are compositionally biased toward basic and acidic residues. C2H2-type zinc fingers lie at residues 179–201 (HKCD…KRVH), 234–256 (YYCG…QRLH), 262–284 (YKCE…RRMH), 290–312 (YRCD…QRIH), 318–340 (YKCS…QRIH), 346–368 (YKCS…RRTH), 374–396 (YECK…QRIH), 402–424 (YKCN…QRSH), 430–452 (YECN…QRIH), 458–480 (YKCS…QRSH), 486–508 (YKCA…RRIH), and 514–536 (YTCG…QRIH).

This sequence belongs to the krueppel C2H2-type zinc-finger protein family.

The protein resides in the nucleus. May be involved in transcriptional regulation. This is Zinc finger protein 34 (ZNF34) from Bos taurus (Bovine).